The following is a 134-amino-acid chain: Complexin-2 (134 aa).

The segment at Met1–Glu114 is disordered. A compositionally biased stretch (basic and acidic residues) spans Asp15–Ala85. Residues Asp29–Ala84 are a coiled coil.

Belongs to the complexin/synaphin family. Binds to the SNARE core complex containing SNAP25, VAMP2 and STX1A. In terms of tissue distribution, nervous system. Present in electric organ (at protein level).

The protein localises to the cytoplasm. Its subcellular location is the cytosol. It localises to the presynapse. The protein resides in the nucleus. It is found in the perikaryon. Its function is as follows. Positively regulates a late step in synaptic vesicle exocytosis. The polypeptide is Complexin-2 (Narke japonica (Japanese sleeper ray)).